A 477-amino-acid chain; its full sequence is Lactate utilization protein B (477 aa).

4Fe-4S ferredoxin-type domains are found at residues 304-334 and 353-382; these read GTEF…GHSY and YDDY…LHEL. [4Fe-4S] cluster-binding residues include cysteine 313, cysteine 316, cysteine 319, cysteine 323, cysteine 366, cysteine 369, and cysteine 373. The disordered stretch occupies residues 433 to 477; it reads KEDGKITKGPGPLKQWTQIRDFPAPNKSRFRDWFEDRRKEKGEDK. Positions 461-477 are enriched in basic and acidic residues; that stretch reads RFRDWFEDRRKEKGEDK.

Belongs to the LutB/YkgF family.

In terms of biological role, is involved in L-lactate degradation and allows cells to grow with lactate as the sole carbon source. Has probably a role as an electron transporter during oxidation of L-lactate. This Bacillus licheniformis (strain ATCC 14580 / DSM 13 / JCM 2505 / CCUG 7422 / NBRC 12200 / NCIMB 9375 / NCTC 10341 / NRRL NRS-1264 / Gibson 46) protein is Lactate utilization protein B.